The sequence spans 135 residues: UPF0738 protein Aflv_2116 (135 aa).

It belongs to the UPF0738 family.

The sequence is that of UPF0738 protein Aflv_2116 from Anoxybacillus flavithermus (strain DSM 21510 / WK1).